The primary structure comprises 163 residues: Small heat shock protein C1 (163 aa).

The sHSP domain maps to threonine 55–asparagine 163.

The protein belongs to the small heat shock protein (HSP20) family.

The chain is Small heat shock protein C1 (hspC1) from Rickettsia prowazekii (strain Madrid E).